The chain runs to 210 residues: Large ribosomal subunit protein uL3 (210 aa).

It belongs to the universal ribosomal protein uL3 family. In terms of assembly, part of the 50S ribosomal subunit. Forms a cluster with proteins L14 and L19.

Its function is as follows. One of the primary rRNA binding proteins, it binds directly near the 3'-end of the 23S rRNA, where it nucleates assembly of the 50S subunit. The sequence is that of Large ribosomal subunit protein uL3 from Solibacter usitatus (strain Ellin6076).